Reading from the N-terminus, the 255-residue chain is tRNA pseudouridine synthase A (255 aa).

Aspartate 43 (nucleophile) is an active-site residue. Tyrosine 94 is a substrate binding site.

Belongs to the tRNA pseudouridine synthase TruA family.

The enzyme catalyses uridine(38/39/40) in tRNA = pseudouridine(38/39/40) in tRNA. Its function is as follows. Formation of pseudouridine at positions 38, 39 and 40 in the anticodon stem and loop of transfer RNAs. This is tRNA pseudouridine synthase A from Pyrobaculum neutrophilum (strain DSM 2338 / JCM 9278 / NBRC 100436 / V24Sta) (Thermoproteus neutrophilus).